Reading from the N-terminus, the 239-residue chain is UDP-2,3-diacylglucosamine hydrolase (239 aa).

The Mn(2+) site is built by aspartate 8, histidine 10, aspartate 41, asparagine 78, and histidine 113. 78–79 (NR) serves as a coordination point for substrate. 5 residues coordinate substrate: aspartate 121, serine 159, asparagine 163, lysine 166, and histidine 194. Mn(2+)-binding residues include histidine 194 and histidine 196.

It belongs to the LpxH family. It depends on Mn(2+) as a cofactor.

It localises to the cell inner membrane. It carries out the reaction UDP-2-N,3-O-bis[(3R)-3-hydroxytetradecanoyl]-alpha-D-glucosamine + H2O = 2-N,3-O-bis[(3R)-3-hydroxytetradecanoyl]-alpha-D-glucosaminyl 1-phosphate + UMP + 2 H(+). The protein operates within glycolipid biosynthesis; lipid IV(A) biosynthesis; lipid IV(A) from (3R)-3-hydroxytetradecanoyl-[acyl-carrier-protein] and UDP-N-acetyl-alpha-D-glucosamine: step 4/6. Hydrolyzes the pyrophosphate bond of UDP-2,3-diacylglucosamine to yield 2,3-diacylglucosamine 1-phosphate (lipid X) and UMP by catalyzing the attack of water at the alpha-P atom. Involved in the biosynthesis of lipid A, a phosphorylated glycolipid that anchors the lipopolysaccharide to the outer membrane of the cell. In Shewanella oneidensis (strain ATCC 700550 / JCM 31522 / CIP 106686 / LMG 19005 / NCIMB 14063 / MR-1), this protein is UDP-2,3-diacylglucosamine hydrolase.